The primary structure comprises 452 residues: tRNA modification GTPase MnmE (452 aa).

(6S)-5-formyl-5,6,7,8-tetrahydrofolate contacts are provided by Arg22, Glu79, and Lys119. A TrmE-type G domain is found at 215–375 (GMKVVIAGRP…LRQHLKQSMG (161 aa)). Residue Asn225 participates in K(+) binding. GTP is bound by residues 225–230 (NAGKSS), 244–250 (TDIAGTT), 269–272 (DTAG), and 333–336 (NKAD). Position 229 (Ser229) interacts with Mg(2+). K(+)-binding residues include Thr244, Ile246, and Thr249. Residue Thr250 coordinates Mg(2+). Lys452 is a (6S)-5-formyl-5,6,7,8-tetrahydrofolate binding site.

It belongs to the TRAFAC class TrmE-Era-EngA-EngB-Septin-like GTPase superfamily. TrmE GTPase family. Homodimer. Heterotetramer of two MnmE and two MnmG subunits. The cofactor is K(+).

It localises to the cytoplasm. Its function is as follows. Exhibits a very high intrinsic GTPase hydrolysis rate. Involved in the addition of a carboxymethylaminomethyl (cmnm) group at the wobble position (U34) of certain tRNAs, forming tRNA-cmnm(5)s(2)U34. This chain is tRNA modification GTPase MnmE, found in Histophilus somni (strain 2336) (Haemophilus somnus).